Here is a 370-residue protein sequence, read N- to C-terminus: Phosphate-binding protein PstS2 (370 aa).

An N-terminal signal peptide occupies residues 1–22; it reads MKFARSGAAVSLLAAGTLVLTA. A lipid anchor (N-palmitoyl cysteine) is attached at C23. A lipid anchor (S-diacylglycerol cysteine) is attached at C23. Phosphate-binding positions include 54-56, S84, D102, and 191-193; these read STA and SGT.

It belongs to the PstS family. The complex is composed of two ATP-binding proteins (PstB), two transmembrane proteins (PstC and PstA) and a solute-binding protein (PstS).

The protein resides in the cell membrane. It localises to the secreted. Functionally, functions in inorganic phosphate uptake, a phosphate-binding protein, although probably not the main uptake protein under phosphate starvation. Part of the ABC transporter complex PstSACB involved in phosphate import. The chain is Phosphate-binding protein PstS2 (pstS2) from Mycobacterium bovis (strain BCG / Pasteur 1173P2).